Reading from the N-terminus, the 148-residue chain is uncharacterized protein (148 aa).

Residues cysteine 21, cysteine 24, cysteine 88, and cysteine 117 each contribute to the [4Fe-4S] cluster site.

The protein belongs to the complex I 20 kDa subunit family. Requires [4Fe-4S] cluster as cofactor.

This is an uncharacterized protein from Methanocaldococcus jannaschii (strain ATCC 43067 / DSM 2661 / JAL-1 / JCM 10045 / NBRC 100440) (Methanococcus jannaschii).